Here is a 342-residue protein sequence, read N- to C-terminus: Ribosomal RNA small subunit methyltransferase H (342 aa).

Residues 43–45, aspartate 61, phenylalanine 87, aspartate 108, and glutamine 115 contribute to the S-adenosyl-L-methionine site; that span reads GGY. Residues 322–342 form a disordered region; sequence ALDEASDGMNLPPLAELEKSR.

It belongs to the methyltransferase superfamily. RsmH family.

It is found in the cytoplasm. The enzyme catalyses cytidine(1402) in 16S rRNA + S-adenosyl-L-methionine = N(4)-methylcytidine(1402) in 16S rRNA + S-adenosyl-L-homocysteine + H(+). Its function is as follows. Specifically methylates the N4 position of cytidine in position 1402 (C1402) of 16S rRNA. The sequence is that of Ribosomal RNA small subunit methyltransferase H from Hyphomonas neptunium (strain ATCC 15444).